Here is a 432-residue protein sequence, read N- to C-terminus: Hexuronate transporter (432 aa).

Positions 1 to 31 (MRKIKGLRWYMIALVTLGTVLGYLTRNTVAA) are cleaved as a signal peptide. Residues 33 to 48 (APTLMEELNISTQQYS) lie on the Periplasmic side of the membrane. The helical transmembrane segment at 49-69 (YIIAAYSAAYTVMQPVAGYVL) threads the bilayer. Over 70-75 (DVLGTK) the chain is Cytoplasmic. The helical transmembrane segment at 76 to 96 (IGYAMFAVLWAVFCGATALAG) threads the bilayer. Residues 97–99 (SWG) are Periplasmic-facing. Residues 100 to 120 (GLAVARGAVGAAEAAMIPAGL) traverse the membrane as a helical segment. The Cytoplasmic portion of the chain corresponds to 121 to 138 (KASSEWFPAKERSIAVGY). A helical transmembrane segment spans residues 139-159 (FNVGSSIGAMIAPPLVVWAIV). Residues 160–164 (MHSWQ) are Periplasmic-facing. The helical transmembrane segment at 165–185 (MAFIISGALSFIWAMAWLIFY) threads the bilayer. The Cytoplasmic segment spans residues 186 to 236 (KHPRDQKHLTDEERDYIINGQEAQHQVSTAKKMSVGQILRNRQFWGIALPR). A helical transmembrane segment spans residues 237 to 257 (FLAEPAWGTFNAWIPLFMFKV). At 258–264 (YGFNLKE) the chain is on the periplasmic side. Residues 265–285 (IAMFAWMPMLFADLGCILGGY) form a helical membrane-spanning segment. Residues 286–293 (LPPLFQRW) lie on the Cytoplasmic side of the membrane. A helical membrane pass occupies residues 294–314 (FGVNLIVSRKMVVTLGAVLMI). The Periplasmic segment spans residues 315 to 317 (GPG). A helical transmembrane segment spans residues 318 to 338 (MIGLFTNPYVAIMLLCIGGFA). At 339–369 (HQALSGALITLSSDVFGRNEVATANGLTGMS) the chain is on the cytoplasmic side. Residues 370 to 390 (AWLASTLFALVVGALADTIGF) traverse the membrane as a helical segment. Position 391 (serine 391) is a topological domain, periplasmic. The chain crosses the membrane as a helical span at residues 392 to 412 (PLFAVLAVFDLLGALVIWTVL). At 413-432 (QNKPAIEVAQETHNDPAPQH) the chain is on the cytoplasmic side.

Belongs to the major facilitator superfamily. Phthalate permease family.

The protein resides in the cell inner membrane. It catalyses the reaction aldehydo-D-glucuronate(in) + H(+)(in) = aldehydo-D-glucuronate(out) + H(+)(out). It carries out the reaction aldehydo-D-galacturonate(out) + H(+)(out) = aldehydo-D-galacturonate(in) + H(+)(in). Functionally, transport of aldohexuronates such as D-glucuronate and D-galacturonate. The polypeptide is Hexuronate transporter (exuT) (Escherichia coli O157:H7).